The sequence spans 150 residues: uncharacterized protein (150 aa).

The region spanning 4–148 (LILYKSIHHK…KAKEFAKSIL (145 aa)) is the Flavodoxin-like domain.

This is an uncharacterized protein from Methanocaldococcus jannaschii (strain ATCC 43067 / DSM 2661 / JAL-1 / JCM 10045 / NBRC 100440) (Methanococcus jannaschii).